The primary structure comprises 423 residues: Subtilisin-like protease 2 (423 aa).

A signal peptide spans 1 to 17; it reads MQLLNLGLLLLLPFVAG. The propeptide occupies 18–123; sequence EIAPQPEPLR…VHPDQHVYLA (106 aa). An Inhibitor I9 domain is found at 37-123; the sequence is QYIVTLKEGL…VHPDQHVYLA (87 aa). A Peptidase S8 domain is found at 132 to 423; it reads RWGLGYMSSK…RKFTLPKNTK (292 aa). Active-site charge relay system residues include Asp-170 and His-202. Residues Asn-249, Asn-262, and Asn-349 are each glycosylated (N-linked (GlcNAc...) asparagine). Ser-358 functions as the Charge relay system in the catalytic mechanism. A glycan (N-linked (GlcNAc...) asparagine) is linked at Asn-389.

The protein belongs to the peptidase S8 family.

The protein resides in the secreted. Secreted subtilisin-like serine protease with keratinolytic activity that contributes to pathogenicity. In Arthroderma otae (strain ATCC MYA-4605 / CBS 113480) (Microsporum canis), this protein is Subtilisin-like protease 2 (SUB2).